The sequence spans 124 residues: Seripauperin-3 (124 aa).

A helical membrane pass occupies residues 7 to 24 (IAAGVAAIAAGIAAAPAT).

It belongs to the SRP1/TIP1 family. Seripauperin subfamily.

It localises to the membrane. The polypeptide is Seripauperin-3 (PAU3) (Saccharomyces cerevisiae (strain ATCC 204508 / S288c) (Baker's yeast)).